The sequence spans 122 residues: Large ribosomal subunit protein uL14 (122 aa).

This sequence belongs to the universal ribosomal protein uL14 family. In terms of assembly, part of the 50S ribosomal subunit. Forms a cluster with proteins L3 and L19. In the 70S ribosome, L14 and L19 interact and together make contacts with the 16S rRNA in bridges B5 and B8.

Binds to 23S rRNA. Forms part of two intersubunit bridges in the 70S ribosome. The sequence is that of Large ribosomal subunit protein uL14 from Streptococcus pyogenes serotype M2 (strain MGAS10270).